We begin with the raw amino-acid sequence, 201 residues long: 3-isopropylmalate dehydratase small subunit (201 aa).

It belongs to the LeuD family. LeuD type 1 subfamily. As to quaternary structure, heterodimer of LeuC and LeuD.

It catalyses the reaction (2R,3S)-3-isopropylmalate = (2S)-2-isopropylmalate. The protein operates within amino-acid biosynthesis; L-leucine biosynthesis; L-leucine from 3-methyl-2-oxobutanoate: step 2/4. Catalyzes the isomerization between 2-isopropylmalate and 3-isopropylmalate, via the formation of 2-isopropylmaleate. This is 3-isopropylmalate dehydratase small subunit from Salmonella paratyphi A (strain ATCC 9150 / SARB42).